Reading from the N-terminus, the 189-residue chain is MSRLWITGYRSYEIGTFGDKDPKILVMKYAIKQLVRQQLENGLEWVLTGGQLGVEQWTIEVVLALKKDWPMLKVAMMLPFEDFGSQWQPNSQSKLQVLKQGVDFVDSVSHATYQGPGQLQNYQAFMLNHTDAALLFYDPEFEGKAKYDYKIIQQHQRKTPYPLTLIDMDQLQDYATTYSEQQAENDFFE.

Belongs to the UPF0398 family.

The sequence is that of UPF0398 protein LCK_00599 from Leuconostoc citreum (strain KM20).